The chain runs to 305 residues: Uridylate-specific endoribonuclease D (305 aa).

Positions 1–17 (MKVYFVFLCLLPSLISG) are cleaved as a signal peptide. An EndoU domain is found at 33–305 (SNAEIQSLAE…RYVASSYPNI (273 aa)). Catalysis depends on residues H182, H197, and K240. An N-linked (GlcNAc...) asparagine glycan is attached at N288.

It belongs to the ENDOU family. As to quaternary structure, monomer. Mn(2+) is required as a cofactor.

It localises to the secreted. The catalysed reaction is ribonucleotidyl-uridine-RNA = a 5'-end dephospho-uridine-RNA + a 3'-end 2',3'-cyclophospho-ribonucleotide-RNA. Its function is as follows. Endoribonuclease that cleaves single-stranded RNAs at 5' of uridylates and releases a product with a 2',3'-cyclic phosphate at the 3'-end. The chain is Uridylate-specific endoribonuclease D (endou-d) from Xenopus laevis (African clawed frog).